A 463-amino-acid polypeptide reads, in one-letter code: Dialkyldecalin synthase (463 aa).

FAD contacts are provided by residues valine 13, 32-33 (ER), isoleucine 121, and aspartate 275.

This sequence belongs to the PheA/TfdB FAD monooxygenase family. As to quaternary structure, homodimer. The cofactor is FAD.

The enzyme catalyses 4-[(2E,7S,8E,10E,13R,14R,16E,18E)-14-ethyl-7,13-dihydroxy-2,16,18-trimethylicosa-2,8,10,16,18-pentaenoyl]-2-methylidene-5-oxo-2,5-dihydro-1H-pyrrol-3-olate = 4-[(1R,2R,4aS,5S,8aR)-2-[(2R,3R,5E,7E)-3-ethyl-2-hydroxy-5,7-dimethylnona-5,7-dien-1-yl]-5-hydroxy-1-methyl-1,2,4a,5,6,7,8,8a-octahydronaphthalene-1-carbonyl]-2-methylidene-5-oxo-2,5-dihydro-1H-pyrrol-3-olate. The protein operates within antibiotic biosynthesis. Its function is as follows. Involved in the biosynthesis of the spirotetramate antibiotics pyrroindomycins. Catalyzes the intramolecular cyclization forming the dialkyldecalin moiety in pyrroindomycins, via an endo-selective [4+2] cycloaddition reaction. In Streptomyces rugosporus, this protein is Dialkyldecalin synthase.